A 361-amino-acid polypeptide reads, in one-letter code: MAGNTIGQLFRVTTFGESHGLALGCIVDGVPPGIPLTEADLQHDLDRRRPGTSRYTTQRREPDQVKILSGVFDGVTTGTSIGLLIENTDQRSQDYSAIKDVFRPGHADYTYEQKYGLRDYRGGGRSSARETAMRVAAGAIAKKYLAEKFGIEIRGCLTQMGDIPLEIKDWRQVELNPFFCPDADKLDALDELMRALKKEGDSIGAKVTVMASGVPAGLGEPVFDRLDADIAHALMSINAVKGVEIGEGFNVVALRGSQNRDEITAQGFQSNHAGGILGGISSGQHIVAHMALKPTSSITVPGRTINRMGEEVEMITKGRHDPCVGIRAVPIAEAMLAIVLMDHLLRHRAQNADVKTEIPRW.

The NADP(+) site is built by Arg48 and Arg54. Residues 125-127, 238-239, Gly278, 293-297, and Arg319 contribute to the FMN site; these read RSS, NA, and KPTSS.

It belongs to the chorismate synthase family. In terms of assembly, homotetramer. FMNH2 is required as a cofactor.

It catalyses the reaction 5-O-(1-carboxyvinyl)-3-phosphoshikimate = chorismate + phosphate. It participates in metabolic intermediate biosynthesis; chorismate biosynthesis; chorismate from D-erythrose 4-phosphate and phosphoenolpyruvate: step 7/7. Functionally, catalyzes the anti-1,4-elimination of the C-3 phosphate and the C-6 proR hydrogen from 5-enolpyruvylshikimate-3-phosphate (EPSP) to yield chorismate, which is the branch point compound that serves as the starting substrate for the three terminal pathways of aromatic amino acid biosynthesis. This reaction introduces a second double bond into the aromatic ring system. This is Chorismate synthase from Salmonella dublin (strain CT_02021853).